The sequence spans 142 residues: MKTFSAKAHEVTREWYVIDATDKVLGRVASEVAHRLRGKHKPEFTPHVDTGDFIIVINAGKLRVTGNKATDKKYYRHSGYPGGIYETTFGKMQERFPGRALEKAVKGMLPKGPLGYAMIKKLKVYAEATHPHSAQQPKALEI.

The protein belongs to the universal ribosomal protein uL13 family. In terms of assembly, part of the 50S ribosomal subunit.

This protein is one of the early assembly proteins of the 50S ribosomal subunit, although it is not seen to bind rRNA by itself. It is important during the early stages of 50S assembly. The polypeptide is Large ribosomal subunit protein uL13 (Paraburkholderia phytofirmans (strain DSM 17436 / LMG 22146 / PsJN) (Burkholderia phytofirmans)).